Reading from the N-terminus, the 196-residue chain is Pyridoxal 5'-phosphate synthase subunit PdxT (196 aa).

L-glutamine is bound at residue 47–49; the sequence is GES. C79 (nucleophile) is an active-site residue. L-glutamine-binding positions include R106 and 134–135; that span reads IR. Residues H170 and E172 each act as charge relay system in the active site.

The protein belongs to the glutaminase PdxT/SNO family. As to quaternary structure, in the presence of PdxS, forms a dodecamer of heterodimers. Only shows activity in the heterodimer.

It carries out the reaction aldehydo-D-ribose 5-phosphate + D-glyceraldehyde 3-phosphate + L-glutamine = pyridoxal 5'-phosphate + L-glutamate + phosphate + 3 H2O + H(+). The enzyme catalyses L-glutamine + H2O = L-glutamate + NH4(+). It functions in the pathway cofactor biosynthesis; pyridoxal 5'-phosphate biosynthesis. In terms of biological role, catalyzes the hydrolysis of glutamine to glutamate and ammonia as part of the biosynthesis of pyridoxal 5'-phosphate. The resulting ammonia molecule is channeled to the active site of PdxS. This is Pyridoxal 5'-phosphate synthase subunit PdxT from Bacillus velezensis (strain DSM 23117 / BGSC 10A6 / LMG 26770 / FZB42) (Bacillus amyloliquefaciens subsp. plantarum).